Consider the following 681-residue polypeptide: Minichromosome maintenance domain-containing protein 2 (681 aa).

The residue at position 292 (Ser292) is a Phosphoserine. The region spanning 533 to 621 is the MCM domain; it reads KQFTTEDFEK…LIAALLLEIS (89 aa).

In terms of tissue distribution, predominantly expressed in the gonads and the brain. Not detected in the heart, lung, nor embryonic fibroblasts.

Its function is as follows. Plays an important role in meiotic recombination and associated DNA double-strand break repair. The protein is Minichromosome maintenance domain-containing protein 2 (Mcmdc2) of Mus musculus (Mouse).